The sequence spans 194 residues: Cysteine and glycine-rich protein 2 (194 aa).

The LIM zinc-binding 1 domain occupies 10-61 (CGACGRTVYHAEEVQCDGRSFHRCCFLCMVCRKNLDSTTVAIHDAEVYCKSC). Positions 64 to 69 (KKYGPK) match the Nuclear localization signal motif. Residues 85–110 (GERLGIKPESSPSPHRPTTNPNTSKF) are disordered. The span at 94-110 (SSPSPHRPTTNPNTSKF) shows a compositional bias: polar residues. The 52-residue stretch at 120–171 (CSRCGDSVYAAEKVIGAGKPWHKNCFRCAKCGKSLESTTLTEKEGEIYCKGC) folds into the LIM zinc-binding 2 domain.

It localises to the nucleus. Interacts with zyxin. May be a component of a signal transduction pathway that mediates adhesion-stimulated changes in gene expression. Totally down-regulated in transformed cells. This chain is Cysteine and glycine-rich protein 2 (CSRP2), found in Coturnix japonica (Japanese quail).